The chain runs to 270 residues: HTH-type transcriptional repressor DrrR1 (270 aa).

Over residues Met1 to Thr11 the composition is skewed to low complexity. Positions Met1–Ile28 are disordered. The HTH tetR-type domain maps to Thr49–Ser109. Positions Ser72 to Val91 form a DNA-binding region, H-T-H motif.

The protein resides in the cytoplasm. Daunorubicin and doxorubicin can induce dissociation of DrrR1 from its DNA complex. Ampicillin cannot release DrrR1 from the DNA complex at the same concentrations. Transcriptional regulator that modulates the expression of the drrA2-drrB2 genes, which encode an ABC transporter involved in daunorubicin efflux, in response to intracellular daunorubicin/doxorubicin accumulation. In the absence of daunorubicin or doxorubicin, binds directly to the drrA2-drrB2 promoter region and negatively regulates expression of the genes. In the presence of daunorubicin or doxorubicin, DrrR1 dissociates from DNA, leading to the transcription of the genes. In Streptomyces coeruleorubidus, this protein is HTH-type transcriptional repressor DrrR1.